Here is a 45-residue protein sequence, read N- to C-terminus: MSKGFSNGTNIKRVRKSGFRARMSNSSGRKILNSRRRKQRKKIAL.

Over residues 1–10 (MSKGFSNGTN) the composition is skewed to polar residues. The interval 1-45 (MSKGFSNGTNIKRVRKSGFRARMSNSSGRKILNSRRRKQRKKIAL) is disordered. The segment covering 32–45 (LNSRRRKQRKKIAL) has biased composition (basic residues).

It belongs to the bacterial ribosomal protein bL34 family.

It is found in the plastid. Its subcellular location is the chloroplast. This chain is Large ribosomal subunit protein bL34c, found in Gracilaria tenuistipitata var. liui (Red alga).